The sequence spans 301 residues: Glutamine amidotransferase-like protein GlxB (301 aa).

Cys-2 is a catalytic residue. The Glutamine amidotransferase type-2 domain occupies 2-298; that stretch reads CGIVGLFLKD…PATVYFWDHQ (297 aa).

This chain is Glutamine amidotransferase-like protein GlxB (glxB), found in Rhizobium meliloti (strain 1021) (Ensifer meliloti).